Here is an 823-residue protein sequence, read N- to C-terminus: Ubiquitin carboxyl-terminal hydrolase 16 (823 aa).

Residues 22–142 (PVCRHIRKGL…QVVDYVRKQA (121 aa)) form a UBP-type zinc finger. Zn(2+) is bound by residues Cys24, His26, Cys48, Cys51, Cys74, Cys77, Cys82, His90, His94, His103, Cys116, and Cys119. Lys140 participates in a covalent cross-link: Glycyl lysine isopeptide (Lys-Gly) (interchain with G-Cter in SUMO2). The disordered stretch occupies residues 146-189 (TPKPAEKDNGNIELENKKLEKESKNEQEREKKENMAKENPPMNS). Basic and acidic residues predominate over residues 149-181 (PAEKDNGNIELENKKLEKESKNEQEREKKENMA). Ser189 carries the post-translational modification Phosphoserine. Residues 196–822 (KGLSNLGNTC…QAYLLFYERI (627 aa)) enclose the USP domain. The active-site Nucleophile is the Cys205. Over residues 394–408 (SGKKSVNDKNLKKTV) the composition is skewed to basic and acidic residues. The tract at residues 394–460 (SGKKSVNDKN…AKNQRRQQKI (67 aa)) is disordered. A compositionally biased stretch (acidic residues) spans 409 to 420 (EDEDQDSEEEKD). The residue at position 415 (Ser415) is a Phosphoserine. The span at 421 to 430 (NDSYIKERSD) shows a compositional bias: basic and acidic residues. Residues 438–458 (HLQKKAKKQAKKQAKNQRRQQ) are compositionally biased toward basic residues. A phosphoserine mark is found at Ser531 and Ser552. Thr554 bears the Phosphothreonine mark. His758 (proton acceptor) is an active-site residue.

This sequence belongs to the peptidase C19 family. USP16 subfamily. Homotetramer. Associates with late pre-40S ribosomes. Interacts with CEP78; promoting deubiquitination of tektins. In terms of processing, phosphorylated at the onset of mitosis and dephosphorylated during the metaphase/anaphase transition. Phosphorylation by AURKB enhances the deubiquitinase activity. As to expression, present in all the tissues examined including fetal brain, lung, liver, kidney, and adult heart, brain, placenta, lung, liver, skeletal muscle, kidney and pancreas.

The protein resides in the nucleus. The protein localises to the cytoplasm. It catalyses the reaction Thiol-dependent hydrolysis of ester, thioester, amide, peptide and isopeptide bonds formed by the C-terminal Gly of ubiquitin (a 76-residue protein attached to proteins as an intracellular targeting signal).. Specifically deubiquitinates 'Lys-120' of histone H2A (H2AK119Ub), a specific tag for epigenetic transcriptional repression, thereby acting as a coactivator. Deubiquitination of histone H2A is a prerequisite for subsequent phosphorylation at 'Ser-11' of histone H3 (H3S10ph), and is required for chromosome segregation when cells enter into mitosis. In resting B- and T-lymphocytes, phosphorylation by AURKB leads to enhance its activity, thereby maintaining transcription in resting lymphocytes. Regulates Hox gene expression via histone H2A deubiquitination. Prefers nucleosomal substrates. Does not deubiquitinate histone H2B. Also deubiquitinates non-histone proteins, such as ribosomal protein RPS27A: deubiquitination of monoubiquitinated RPS27A promotes maturation of the 40S ribosomal subunit. Also mediates deubiquitination of tektin proteins (TEKT1, TEKT2, TEK3, TEKT4 and TEKT5), promoting their stability. The protein is Ubiquitin carboxyl-terminal hydrolase 16 of Homo sapiens (Human).